The sequence spans 356 residues: MSDDLETLRQETLAALAAATDRREWDAVRVGTLGKSGRLTALLKELGRMTPEARKLRGAAVNRLRDDLTREIEARGAEIESAILNARLAAERVDVTLPVRPESSGAIHPISRTMEEMAAIFGAMGFKVAEGPDIETDWHNFSALNTPDHHPARTDQDTFYLPAREGTSQERVLRTQTSGVQIRTMLGEEPPIRIIAPGRTYRADHDATHSPMFHQCEGLVIDRGITLAHLKGCLTDFLRAYFGNPDLPVRFRASYFPFTEPSMEVDIGWSRKSGEIGGGDDWLEVLGSGMVHPRVLANCGLDPREWQGFAFGMGIERLTMLRHGIPDLRSFYESDVRWLRHYGASPLSPALLHEGL.

Glutamate 260 contributes to the Mg(2+) binding site.

It belongs to the class-II aminoacyl-tRNA synthetase family. Phe-tRNA synthetase alpha subunit type 1 subfamily. In terms of assembly, tetramer of two alpha and two beta subunits. It depends on Mg(2+) as a cofactor.

The protein localises to the cytoplasm. The enzyme catalyses tRNA(Phe) + L-phenylalanine + ATP = L-phenylalanyl-tRNA(Phe) + AMP + diphosphate + H(+). The sequence is that of Phenylalanine--tRNA ligase alpha subunit from Gluconacetobacter diazotrophicus (strain ATCC 49037 / DSM 5601 / CCUG 37298 / CIP 103539 / LMG 7603 / PAl5).